A 709-amino-acid chain; its full sequence is Fatty acid oxidation complex subunit alpha (709 aa).

Residues M1–P188 form an enoyl-CoA hydratase region. The tract at residues R308–F709 is 3-hydroxyacyl-CoA dehydrogenase.

This sequence in the N-terminal section; belongs to the enoyl-CoA hydratase/isomerase family. The protein in the central section; belongs to the 3-hydroxyacyl-CoA dehydrogenase family. Heterotetramer of two alpha chains (FadJ) and two beta chains (FadI).

The protein localises to the cytoplasm. The catalysed reaction is a (3S)-3-hydroxyacyl-CoA = a (2E)-enoyl-CoA + H2O. It carries out the reaction a 4-saturated-(3S)-3-hydroxyacyl-CoA = a (3E)-enoyl-CoA + H2O. The enzyme catalyses a (3S)-3-hydroxyacyl-CoA + NAD(+) = a 3-oxoacyl-CoA + NADH + H(+). It catalyses the reaction (3S)-3-hydroxybutanoyl-CoA = (3R)-3-hydroxybutanoyl-CoA. It functions in the pathway lipid metabolism; fatty acid beta-oxidation. Functionally, catalyzes the formation of a hydroxyacyl-CoA by addition of water on enoyl-CoA. Also exhibits 3-hydroxyacyl-CoA epimerase and 3-hydroxyacyl-CoA dehydrogenase activities. The chain is Fatty acid oxidation complex subunit alpha from Shewanella sp. (strain MR-7).